Reading from the N-terminus, the 269-residue chain is MEQKTEHNVTLHGFNNLTKSLSFNMYDICYTKTKEEREAYIEYIDEQYNAERLTSILKNVSDIIGAHVLNVAKQDYVPQGASVTFLVSEGPVVEVPTESYEESPGPLPENVVLQLDKSHITVHTYPEYHPTEGISTFRADIDVSTCGEISPLKALNYLIRSFDTDLMTIDYKVRGFTRDIHGYKLFIDHDISSIQNYIPEEIKELFHMIDVNVYQDNIFHTKCKRREFDLNNYLFGYTKDRLTPEEQEDITKQLQIEMDEIYYGKNFVN.

The active-site Schiff-base intermediate with substrate; via pyruvic acid is the Ser-118. Ser-118 is subject to Pyruvic acid (Ser); by autocatalysis. His-123 serves as the catalytic Proton acceptor; for processing activity. Cys-146 functions as the Proton donor; for catalytic activity in the catalytic mechanism.

The protein belongs to the prokaryotic AdoMetDC family. Type 2 subfamily. Heterooctamer of four alpha and four beta chains arranged as a tetramer of alpha/beta heterodimers. Pyruvate serves as cofactor. Post-translationally, is synthesized initially as an inactive proenzyme. Formation of the active enzyme involves a self-maturation process in which the active site pyruvoyl group is generated from an internal serine residue via an autocatalytic post-translational modification. Two non-identical subunits are generated from the proenzyme in this reaction, and the pyruvate is formed at the N-terminus of the alpha chain, which is derived from the carboxyl end of the proenzyme. The post-translation cleavage follows an unusual pathway, termed non-hydrolytic serinolysis, in which the side chain hydroxyl group of the serine supplies its oxygen atom to form the C-terminus of the beta chain, while the remainder of the serine residue undergoes an oxidative deamination to produce ammonia and the pyruvoyl group blocking the N-terminus of the alpha chain.

It carries out the reaction S-adenosyl-L-methionine + H(+) = S-adenosyl 3-(methylsulfanyl)propylamine + CO2. It functions in the pathway amine and polyamine biosynthesis; S-adenosylmethioninamine biosynthesis; S-adenosylmethioninamine from S-adenosyl-L-methionine: step 1/1. Catalyzes the decarboxylation of S-adenosylmethionine to S-adenosylmethioninamine (dcAdoMet), the propylamine donor required for the synthesis of the polyamines spermine and spermidine from the diamine putrescine. This Brevibacillus brevis (strain 47 / JCM 6285 / NBRC 100599) protein is S-adenosylmethionine decarboxylase proenzyme.